Here is a 185-residue protein sequence, read N- to C-terminus: Ribosome-recycling factor (185 aa).

The protein belongs to the RRF family.

It is found in the cytoplasm. Its function is as follows. Responsible for the release of ribosomes from messenger RNA at the termination of protein biosynthesis. May increase the efficiency of translation by recycling ribosomes from one round of translation to another. This Streptococcus suis (strain 98HAH33) protein is Ribosome-recycling factor.